A 365-amino-acid chain; its full sequence is MWLQHLSLKTFRNYKETKIDFNPKLNVFLGRNAQGKTNMLEAIYFLALTRSHRTRTDKNLIHFDEEQLHLSGLVQKKTGSIPLEIELTQKGRVTKVNHLKQARLSDYVGHMNVVLFAPEDLQLIKGAPSIRRKFIDMELGQIKPIYLSDLTNYNHILKQRNTYLKSAQKIDETFLSVLDDQLVDYGCRVMNHRLDFIKKLESFGRKKHFELSNQIEELSISYQSSVNITDKQNLSESFKIALEKSRSRDLFKKNTGVGPHRDDISFYINGMDASFGSQGQHRSLVLSIKLAEIELMESITTESPILLLDDVMSELDNTRQLKLLETISQSIQTFITTTSLDHLQNLPENLSIFTIQDGKAAVNGN.

30-37 (GRNAQGKT) serves as a coordination point for ATP.

It belongs to the RecF family.

Its subcellular location is the cytoplasm. Functionally, the RecF protein is involved in DNA metabolism; it is required for DNA replication and normal SOS inducibility. RecF binds preferentially to single-stranded, linear DNA. It also seems to bind ATP. This Streptococcus pneumoniae serotype 4 (strain ATCC BAA-334 / TIGR4) protein is DNA replication and repair protein RecF.